Here is a 283-residue protein sequence, read N- to C-terminus: Thymidylate synthase (283 aa).

Arg22 provides a ligand contact to dUMP. Cys160 (nucleophile) is an active-site residue. Residues 180–183 (RSCD), Asn191, and 221–223 (HIY) each bind dUMP. A (6R)-5,10-methylene-5,6,7,8-tetrahydrofolate-binding site is contributed by Asp183. Ser282 provides a ligand contact to (6R)-5,10-methylene-5,6,7,8-tetrahydrofolate.

It belongs to the thymidylate synthase family. Bacterial-type ThyA subfamily. As to quaternary structure, homodimer.

It localises to the cytoplasm. The catalysed reaction is dUMP + (6R)-5,10-methylene-5,6,7,8-tetrahydrofolate = 7,8-dihydrofolate + dTMP. Its pathway is pyrimidine metabolism; dTTP biosynthesis. Its function is as follows. Catalyzes the reductive methylation of 2'-deoxyuridine-5'-monophosphate (dUMP) to 2'-deoxythymidine-5'-monophosphate (dTMP) while utilizing 5,10-methylenetetrahydrofolate (mTHF) as the methyl donor and reductant in the reaction, yielding dihydrofolate (DHF) as a by-product. This enzymatic reaction provides an intracellular de novo source of dTMP, an essential precursor for DNA biosynthesis. This Vibrio cholerae serotype O1 (strain ATCC 39315 / El Tor Inaba N16961) protein is Thymidylate synthase.